Consider the following 142-residue polypeptide: Transmembrane protein 170A (142 aa).

The Lumenal segment spans residues 1–48 (MEGGGGGLGGEPGLLQQILSLRLVPRVGNVTDCQRATLCSFPEMWYGV). An N-linked (GlcNAc...) asparagine glycan is attached at asparagine 29. The helical transmembrane segment at 49–69 (FLWALVSSLFFHIPAGLLALF) threads the bilayer. Residues 70–78 (TLRHHKYGR) are Cytoplasmic-facing. A helical membrane pass occupies residues 79 to 99 (FMSVGIFLMGVLGPISAGILT). Topologically, residues 100 to 114 (SAAIAGVYKAAGKEM) are lumenal. Residues 115-135 (IPFEALVLGVGQTFCVLIVSF) traverse the membrane as a helical segment. Topologically, residues 136-142 (LRILATL) are cytoplasmic.

It belongs to the TMEM170 family.

The protein localises to the endoplasmic reticulum membrane. It is found in the nucleus envelope. May regulate membrane morphogenesis in the endoplasmic reticulum (ER) by promoting ER sheet formation at the expense of ER tubules. This is Transmembrane protein 170A (tmem170a) from Xenopus laevis (African clawed frog).